A 765-amino-acid polypeptide reads, in one-letter code: Probable dipeptidyl peptidase 4 (765 aa).

An N-terminal signal peptide occupies residues 1–14 (MKWSILLLVGCAAA). Asn35, Asn78, Asn101, Asn110, Asn169, Asn218, Asn465, and Asn490 each carry an N-linked (GlcNAc...) asparagine glycan. Catalysis depends on Ser613, which acts as the Charge relay system. N-linked (GlcNAc...) asparagine glycosylation occurs at Asn665. Catalysis depends on charge relay system residues Asp690 and His725.

Belongs to the peptidase S9B family.

It is found in the secreted. It catalyses the reaction Release of an N-terminal dipeptide, Xaa-Yaa-|-Zaa-, from a polypeptide, preferentially when Yaa is Pro, provided Zaa is neither Pro nor hydroxyproline.. Extracellular dipeptidyl-peptidase which removes N-terminal dipeptides sequentially from polypeptides having unsubstituted N-termini provided that the penultimate residue is proline. Contributes to pathogenicity. This Aspergillus fumigatus (strain CBS 144.89 / FGSC A1163 / CEA10) (Neosartorya fumigata) protein is Probable dipeptidyl peptidase 4 (dpp4).